A 689-amino-acid polypeptide reads, in one-letter code: MPLTVRAGHAPYRLPLSNYWWLLLGRHSLRHVHSYLRLHKGLRIPLPWPEQECLHLHPKPYKCLLRYPCITRQPHLLQGWPTKSSLWFDPKPYHPSADSKLLPLGLITLSACSTRVSATTRWSSFHATDPSLSWLTGSSPWLVILQGQGGSLFCHDVLQGRLYILSHSVSLFLKTGLRHCEAIYRAPLWRDRPLPSLWTCRDPDKAFLPTLLARSARRGLAAFYALWRLHLGSRSELSHPVLEWESTELVLTDWRRGRNEAQRDAPSVAEHFARCRPLLDELCGEGGWLPFAFLSTSPHVWLILTEGGPVLAVDVNDTSVWRIADDLELLRRLGSLLLLSGLRLPLRPPSGSGEAAGEPGYEEEERRGRASTASATAATSTRGPTRPTRVTRKGRVATGGVHLSARPESEEQTDGHHGRQESSDDHQRGGSGRGHRDDGAHRHANDKTEPQQRGEHEERKQTDSGRHEHAQESQVARRDEEETEQGDSERSCGGATQTYGGRGRHDSCPSIPLSVPGPDPRLWVPPPHLLFPSPLPPMTPVDDEPSVRPRCPPGPAEEPPTCRPRPPRPSSDTPLSAVSRPSAPPVPPPSTARVRFFLSSSSSSPSYSPAPLSPPSPVSPSSPRSPFIPPIRSPGLRAKPRVSSGHPAAFPPAPSSAPARSERVTSVPSSASPSASCVGKSQPPAAHTA.

Composition is skewed to low complexity over residues 347–359 (RPPS…AGEP) and 370–388 (ASTA…TRPT). The tract at residues 347-689 (RPPSGSGEAA…KSQPPAAHTA (343 aa)) is disordered. Positions 405–480 (ARPESEEQTD…QESQVARRDE (76 aa)) are enriched in basic and acidic residues. Composition is skewed to pro residues over residues 515-539 (VPGP…PPMT) and 550-569 (RCPP…PPRP). Composition is skewed to low complexity over residues 570–581 (SSDTPLSAVSRP) and 591–610 (TARV…YSPA). Pro residues predominate over residues 611–620 (PLSPPSPVSP). A compositionally biased stretch (low complexity) spans 666–676 (SVPSSASPSAS).

This is an uncharacterized protein from Homo sapiens (Human).